Consider the following 240-residue polypeptide: MIAFIVLPILAAVLQQSSGSVDFDSESPRKPEIQNKIVDLHNSLRRSVNPTASNMLKMEWYPEAADNAERWAYRCIDSHSPRDSRVLGGIKCGENIYISPVPIKWTEIIHAWHGENKNFKYGIGADPPNAVTGHFTQIVWYKSYHVGCAAAYCPSSEYSYFYVCQYCPAGNIRGKTATPYKSGPPCGDCPSACDNGLCTNPCTKEDKYSNCKSLVQQAGCQDKQMQSDCSAICFCQNKII.

An N-terminal signal peptide occupies residues 1–19; that stretch reads MIAFIVLPILAAVLQQSSG. The region spanning 38 to 166 is the SCP domain; that stretch reads VDLHNSLRRS…EYSYFYVCQY (129 aa). 8 disulfide bridges follow: cysteine 75/cysteine 153, cysteine 92/cysteine 167, cysteine 148/cysteine 164, cysteine 186/cysteine 193, cysteine 189/cysteine 198, cysteine 202/cysteine 235, cysteine 211/cysteine 229, and cysteine 220/cysteine 233. In terms of domain architecture, ShKT spans 202-235; sequence CTKEDKYSNCKSLVQQAGCQDKQMQSDCSAICFC.

The protein belongs to the CRISP family. Expressed by the venom gland.

It localises to the secreted. Weakly blocks contraction of smooth muscle elicited by high potassium-induced depolarization, but does not block caffeine-stimulated contraction. May target voltage-gated calcium channels on smooth muscle. The sequence is that of Cysteine-rich secretory protein from Crotalus adamanteus (Eastern diamondback rattlesnake).